The primary structure comprises 589 residues: Threonine--tRNA ligase (589 aa).

Positions 191–487 are catalytic; it reads DHRKIGKNLG…LLEQTKGNFP (297 aa). The Zn(2+) site is built by Cys-284, His-335, and His-464.

It belongs to the class-II aminoacyl-tRNA synthetase family. In terms of assembly, homodimer. Requires Zn(2+) as cofactor.

The protein resides in the cytoplasm. It carries out the reaction tRNA(Thr) + L-threonine + ATP = L-threonyl-tRNA(Thr) + AMP + diphosphate + H(+). Catalyzes the attachment of threonine to tRNA(Thr) in a two-step reaction: L-threonine is first activated by ATP to form Thr-AMP and then transferred to the acceptor end of tRNA(Thr). Also edits incorrectly charged L-seryl-tRNA(Thr). The protein is Threonine--tRNA ligase of Mycoplasmopsis pulmonis (strain UAB CTIP) (Mycoplasma pulmonis).